We begin with the raw amino-acid sequence, 959 residues long: DNA translocase FtsK 1 (959 aa).

Transmembrane regions (helical) follow at residues 1–21 (MGLG…WRYV), 39–59 (IWLA…LTSG), and 83–103 (GWTG…PMVF). Over 104 to 959 (GHSWRQLLAR…REVIAPGGGD (856 aa)) the chain is Cytoplasmic. The disordered stretch occupies residues 122 to 427 (PVQADARHDE…AAPPPPAVPA (306 aa)). Residues 126 to 136 (DARHDEADDGL) show a composition bias toward basic and acidic residues. Low complexity-rich tracts occupy residues 220–229 (ATPKAATQAP) and 264–286 (APSA…DAPA). Over residues 287 to 298 (SAPPEPAEPSPP) the composition is skewed to pro residues. Acidic residues predominate over residues 333 to 379 (PEPEPEPEAETEVTPEAEAEPEAEPEAEAEPEAEAEAEAEAEAEPEA). Positions 380–403 (EAPAPESVAPALQEAEAATAAEAP) are enriched in low complexity. In terms of domain architecture, FtsK spans 605-814 (GNPVVTDLAR…FQVSSKIDSR (210 aa)). 625–630 (GSGKSV) contacts ATP.

Belongs to the FtsK/SpoIIIE/SftA family. As to quaternary structure, homohexamer. Forms a ring that surrounds DNA.

It localises to the cell inner membrane. Its function is as follows. Essential cell division protein that coordinates cell division and chromosome segregation. The N-terminus is involved in assembly of the cell-division machinery. The C-terminus functions as a DNA motor that moves dsDNA in an ATP-dependent manner towards the dif recombination site, which is located within the replication terminus region. Translocation stops specifically at Xer-dif sites, where FtsK interacts with the Xer recombinase, allowing activation of chromosome unlinking by recombination. FtsK orienting polar sequences (KOPS) guide the direction of DNA translocation. FtsK can remove proteins from DNA as it translocates, but translocation stops specifically at XerCD-dif site, thereby preventing removal of XerC and XerD from dif. This chain is DNA translocase FtsK 1 (ftsK1), found in Ralstonia nicotianae (strain ATCC BAA-1114 / GMI1000) (Ralstonia solanacearum).